The primary structure comprises 354 residues: Anthranilate phosphoribosyltransferase (354 aa).

5-phospho-alpha-D-ribose 1-diphosphate is bound by residues glycine 94, 97 to 98, threonine 102, 104 to 107, 122 to 130, and serine 134; these read GD, NIST, and KHGNRAASS. Residue glycine 94 coordinates anthranilate. Residue serine 106 participates in Mg(2+) binding. Asparagine 125 serves as a coordination point for anthranilate. Arginine 180 provides a ligand contact to anthranilate. Residues aspartate 238 and glutamate 239 each contribute to the Mg(2+) site.

It belongs to the anthranilate phosphoribosyltransferase family. Homodimer. Mg(2+) serves as cofactor.

The enzyme catalyses N-(5-phospho-beta-D-ribosyl)anthranilate + diphosphate = 5-phospho-alpha-D-ribose 1-diphosphate + anthranilate. It participates in amino-acid biosynthesis; L-tryptophan biosynthesis; L-tryptophan from chorismate: step 2/5. Functionally, catalyzes the transfer of the phosphoribosyl group of 5-phosphorylribose-1-pyrophosphate (PRPP) to anthranilate to yield N-(5'-phosphoribosyl)-anthranilate (PRA). This Streptomyces avermitilis (strain ATCC 31267 / DSM 46492 / JCM 5070 / NBRC 14893 / NCIMB 12804 / NRRL 8165 / MA-4680) protein is Anthranilate phosphoribosyltransferase.